A 448-amino-acid chain; its full sequence is Elongation factor 1-alpha (448 aa).

Positions 5–230 (KIHISIVVIG…DQINEPKRPS (226 aa)) constitute a tr-type G domain. Residues 14-21 (GHVDSGKS) form a G1 region. GTP is bound at residue 14–21 (GHVDSGKS). N6,N6-dimethyllysine is present on lysine 55. Positions 70-74 (GITID) are G2. Lysine 79 is modified (N6,N6,N6-trimethyllysine). The tract at residues 91 to 94 (DAPG) is G3. GTP is bound by residues 91-95 (DAPGH) and 153-156 (NKMD). A G4 region spans residues 153-156 (NKMD). Lysine 187 bears the N6,N6,N6-trimethyllysine mark. A G5 region spans residues 194–196 (SGF). Residue lysine 261 is modified to N6-methyllysine. Glutamate 289 is modified (5-glutamyl glycerylphosphorylethanolamine). Lysine 306 is modified (N6,N6,N6-trimethyllysine). Glutamate 362 is modified (5-glutamyl glycerylphosphorylethanolamine). At lysine 396 the chain carries N6,N6,N6-trimethyllysine.

It belongs to the TRAFAC class translation factor GTPase superfamily. Classic translation factor GTPase family. EF-Tu/EF-1A subfamily.

It is found in the cytoplasm. In terms of biological role, this protein promotes the GTP-dependent binding of aminoacyl-tRNA to the A-site of ribosomes during protein biosynthesis. In Solanum lycopersicum (Tomato), this protein is Elongation factor 1-alpha.